The chain runs to 211 residues: Protein TMA23 (211 aa).

The tract at residues 115–211 (ASFVVSSASS…SARRDRKEHI (97 aa)) is disordered. Low complexity predominate over residues 116-125 (SFVVSSASSS). 3 stretches are compositionally biased toward basic residues: residues 140-149 (VKRKKLKKDK), 158-176 (KKKK…KKSK), and 185-197 (SKHK…KKHK). Positions 198–211 (KEESSARRDRKEHI) are enriched in basic and acidic residues.

As to quaternary structure, forms homooligomers. Associates with ribosomal complexes.

Its subcellular location is the nucleus. The protein localises to the nucleolus. Trans-acting factors of the ribosome biogenesis process. The protein is Protein TMA23 (TMA23) of Saccharomyces cerevisiae (strain ATCC 204508 / S288c) (Baker's yeast).